The primary structure comprises 196 residues: O-methyltransferase dpmpI (196 aa).

S-adenosyl-L-methionine-binding positions include 127–128 (GG), Asp152, and 174–175 (SF). Positions 166 to 196 (NGIEAVPHSFEDPQPIKSKSPRLDNLARERL) are disordered. Positions 186–196 (PRLDNLARERL) are enriched in basic and acidic residues.

The protein belongs to the class I-like SAM-binding methyltransferase superfamily. Cation-independent O-methyltransferase family.

Its pathway is secondary metabolite biosynthesis; terpenoid biosynthesis. O-methyltransferase; part of the gene cluster that mediates the biosynthesis of diterpenoid pyrones. The first step of the pathway is the synthesis of the alpha-pyrone moiety by the polyketide synthase dpmpA via condensation of one acetyl-CoA starter unit with 3 malonyl-CoA units and 2 methylations. The alpha-pyrone is then combined with geranylgeranyl pyrophosphate (GGPP) formed by the GGPP synthase dpmpD through the action of the prenyltransferase dpmpC to yield a linear alpha-pyrone diterpenoid. Subsequent steps in the diterpenoid pyrone biosynthetic pathway involve the decalin core formation, which is initiated by the epoxidation of the C10-C11 olefin by the FAD-dependent oxidoreductase dpmpE, and is followed by a cyclization cascade catalyzed by the terpene cyclase dpmpB. The short chain dehydrogenase/reductase dpmpG then oxidizes the 8S hydroxy group to a ketone and the short chain dehydrogenase/reductase dpmpH reduces the ketone to the 8R hydroxy group to yield higginsianin B. Higginsianin B is further methylated by the methyltransferase dpmpI to produce the intermediate named FDDP B. The cytochrome P450 monooxygenase dpmpJ then oxidizes the C-26 methyl to primary alcohol, producing the final diterpenoid pyrone with a C-26 primary alcohol on the gamma-pyrone moiety named FDDP C. In Macrophomina phaseolina (strain MS6) (Charcoal rot fungus), this protein is O-methyltransferase dpmpI.